The primary structure comprises 393 residues: Putative odorant receptor 69a, isoform A (393 aa).

The Cytoplasmic segment spans residues 1–39 (MQLHDHMKYIDLGCKMACIPRYQWKGRPTERQFYASEQR). The helical transmembrane segment at 40–60 (IVFLLGTICQIFQITGVLIYW) threads the bilayer. Residues 61 to 76 (YCNGRLATETGTFVAQ) lie on the Extracellular side of the membrane. Residues 77–97 (LSEMCSSFCLTFVGFCNVYAI) form a helical membrane-spanning segment. At 98–139 (STNRNQIETLLEELHQIYPRYRKNHYRCQHYFDMAMTIMRIE) the chain is on the cytoplasmic side. Residues 140 to 160 (FLFYMILYVYYNSAPLWVLLW) traverse the membrane as a helical segment. Residues 161–189 (EHLHEEYDLSFKTQTNTWFPWKVHGSALG) are Extracellular-facing. Residues 190 to 210 (FGMAVLSITVGSFVGVGFSIV) traverse the membrane as a helical segment. The Cytoplasmic segment spans residues 211 to 269 (TQNLICLLTFQLKLHYDGISSQLVSLDCRRPGAHKELSILIAHHSRILQLGDQVNDIMN). The chain crosses the membrane as a helical span at residues 270-290 (FVFGSSLVGATIAICMSSVSI). The Extracellular segment spans residues 291–304 (MLLDLASAFKYASG). Residues 305 to 325 (LVAFVLYNFVICYMGTEVTLA) form a helical membrane-spanning segment. Topologically, residues 326 to 365 (SGKVLPAAFYNNWYEGDLVYRRMLLILMMRATKPYMWKTY) are cytoplasmic. Residues 366-386 (KLAPVSITTYMATLKFSYQMF) traverse the membrane as a helical segment. At 387-393 (TCVRSLK) the chain is on the extracellular side.

Belongs to the insect chemoreceptor superfamily. Heteromeric odorant receptor channel (TC 1.A.69) family. Or49a subfamily. In terms of assembly, interacts with Orco. Complexes exist early in the endomembrane system in olfactory sensory neurons (OSNs), coupling these complexes to the conserved ciliary trafficking pathway. As to expression, expressed in olfactory sensory neurons in the antenna.

The protein localises to the cell membrane. Odorant receptor which mediates acceptance or avoidance behavior, depending on its substrates. The odorant receptor repertoire encodes a large collection of odor stimuli that vary widely in identity, intensity, and duration. May form a complex with Orco to form odorant-sensing units, providing sensitive and prolonged odorant signaling and calcium permeability. This Drosophila melanogaster (Fruit fly) protein is Putative odorant receptor 69a, isoform A (Or69a).